The following is a 660-amino-acid chain: PAN2-PAN3 deadenylation complex subunit PAN3 (660 aa).

A C3H1-type zinc finger spans residues 7–36 (SAKDTFCKNVLIYGYCKYENKGCAFSHTVK). Disordered stretches follow at residues 36-60 (KPTSSVPGSQGSNATTNSSGNTNAD) and 150-186 (SPVMAQSVSTPGAKANGNIQHNPYLPGNAGTPQPTSA). The segment covering 43–59 (GSQGSNATTNSSGNTNA) has biased composition (low complexity). Positions 59–79 (ADMKKKFNFNTPSFQPSTVPN) match the PABPC-interacting motif-2 (PAM-2) motif. The span at 150-159 (SPVMAQSVST) shows a compositional bias: polar residues. A pseudokinase domain region spans residues 252–528 (QTLPRSNLPD…LQEFNRNHLS (277 aa)). ATP-binding positions include arginine 304, 358-365 (DYFPNSNT), and 415-416 (SK). Residues 529–567 (RRILNFCSNAQDSQDFMESQLSTELENARVFRLITKLNF) are a coiled coil. Residues 568–660 (IIDRPEYDND…DSAFRTLTRG (93 aa)) are knob domain.

It belongs to the protein kinase superfamily. PAN3 family. As to quaternary structure, homodimer. Forms a heterotrimer with a catalytic subunit PAN2 to form the poly(A)-nuclease (PAN) deadenylation complex. Interacts (via PAM-2 motif) with poly(A)-binding protein PAB1 (via PABC domain), conferring substrate specificity of the enzyme complex.

Its subcellular location is the cytoplasm. Its function is as follows. Regulatory subunit of the poly(A)-nuclease (PAN) deadenylation complex, one of two cytoplasmic mRNA deadenylases involved in mRNA turnover. PAN specifically shortens poly(A) tails of RNA and the activity is stimulated by poly(A)-binding protein PAB1. PAN deadenylation is followed by rapid degradation of the shortened mRNA tails by the CCR4-NOT complex. Deadenylated mRNAs are then degraded by two alternative mechanisms, namely exosome-mediated 3'-5' exonucleolytic degradation, or deadenylation-dependent mRNA decaping and subsequent 5'-3' exonucleolytic degradation by XRN1. May also be involved in post-transcriptional maturation of mRNA poly(A) tails. PAN3 acts as a positive regulator for PAN activity, recruiting the catalytic subunit PAN2 to mRNA via its interaction with RNA and with PAB1. In Debaryomyces hansenii (strain ATCC 36239 / CBS 767 / BCRC 21394 / JCM 1990 / NBRC 0083 / IGC 2968) (Yeast), this protein is PAN2-PAN3 deadenylation complex subunit PAN3.